Consider the following 366-residue polypeptide: Chitoporin (366 aa).

Positions 1–23 are cleaved as a signal peptide; that stretch reads MDKMFKRTVIGAAVALASTGLMA.

Belongs to the Gram-negative porin family.

The protein resides in the cell outer membrane. Functionally, involved in the uptake of chitosugars. The protein is Chitoporin (chiP) of Vibrio furnissii.